A 400-amino-acid polypeptide reads, in one-letter code: Renin (400 aa).

The first 23 residues, 1-23, serve as a signal peptide directing secretion; sequence MDAWRGMPRWGLLLLLWGSCTFG. A propeptide spans 24–60 (activation peptide); that stretch reads LPTETTTFKRISLKRMPSIRESLKERGVDMARLGPER. Asparagine 65 carries N-linked (GlcNAc...) asparagine glycosylation. The 318-residue stretch at 80 to 397 folds into the Peptidase A1 domain; sequence YYGEIGIGTP…DRGNNRIGFA (318 aa). The active site involves aspartate 98. Cysteine 111 and cysteine 118 form a disulfide bridge. N-linked (GlcNAc...) asparagine glycosylation is present at asparagine 135. An intrachain disulfide couples cysteine 277 to cysteine 281. The active site involves aspartate 286. Cysteines 319 and 356 form a disulfide.

It belongs to the peptidase A1 family. Interacts with ATP6AP2.

Its subcellular location is the secreted. It is found in the membrane. It catalyses the reaction Cleavage of Leu-|-Xaa bond in angiotensinogen to generate angiotensin I.. Interaction with ATP6AP2 results in a 5-fold increased efficiency in angiotensinogen processing. Renin is a highly specific endopeptidase, whose only known function is to generate angiotensin I from angiotensinogen in the plasma, initiating a cascade of reactions that produce an elevation of blood pressure and increased sodium retention by the kidney. This chain is Renin (REN), found in Callithrix jacchus (White-tufted-ear marmoset).